The chain runs to 302 residues: 4-diphosphocytidyl-2-C-methyl-D-erythritol kinase (302 aa).

Residue K20 is part of the active site. Residue 106 to 116 coordinates ATP; the sequence is PVASGVGGGSG. D148 is a catalytic residue.

It belongs to the GHMP kinase family. IspE subfamily.

It carries out the reaction 4-CDP-2-C-methyl-D-erythritol + ATP = 4-CDP-2-C-methyl-D-erythritol 2-phosphate + ADP + H(+). The protein operates within isoprenoid biosynthesis; isopentenyl diphosphate biosynthesis via DXP pathway; isopentenyl diphosphate from 1-deoxy-D-xylulose 5-phosphate: step 3/6. Catalyzes the phosphorylation of the position 2 hydroxy group of 4-diphosphocytidyl-2C-methyl-D-erythritol. This is 4-diphosphocytidyl-2-C-methyl-D-erythritol kinase from Bartonella henselae (strain ATCC 49882 / DSM 28221 / CCUG 30454 / Houston 1) (Rochalimaea henselae).